The following is a 344-amino-acid chain: Phosphoribosylformylglycinamidine cyclo-ligase (344 aa).

The protein belongs to the AIR synthase family.

It localises to the cytoplasm. It catalyses the reaction 2-formamido-N(1)-(5-O-phospho-beta-D-ribosyl)acetamidine + ATP = 5-amino-1-(5-phospho-beta-D-ribosyl)imidazole + ADP + phosphate + H(+). It functions in the pathway purine metabolism; IMP biosynthesis via de novo pathway; 5-amino-1-(5-phospho-D-ribosyl)imidazole from N(2)-formyl-N(1)-(5-phospho-D-ribosyl)glycinamide: step 2/2. This Neisseria gonorrhoeae (strain ATCC 700825 / FA 1090) protein is Phosphoribosylformylglycinamidine cyclo-ligase.